Here is a 97-residue protein sequence, read N- to C-terminus: MNLAIQDVVKRPLITEKAERNREANRQFAFEVHRDATKIQVKQAVEKLFNVHVLDVRTAIARGKNKRVGRNVGRRPNWKKAFVTLKEGETIALFEGT.

The protein belongs to the universal ribosomal protein uL23 family. Part of the 50S ribosomal subunit. Contacts protein L29, and trigger factor when it is bound to the ribosome.

One of the early assembly proteins it binds 23S rRNA. One of the proteins that surrounds the polypeptide exit tunnel on the outside of the ribosome. Forms the main docking site for trigger factor binding to the ribosome. This chain is Large ribosomal subunit protein uL23, found in Anaeromyxobacter sp. (strain Fw109-5).